Here is a 127-residue protein sequence, read N- to C-terminus: Aspartate 1-decarboxylase (127 aa).

Ser-25 (schiff-base intermediate with substrate; via pyruvic acid) is an active-site residue. Ser-25 bears the Pyruvic acid (Ser) mark. Thr-57 lines the substrate pocket. Tyr-58 (proton donor) is an active-site residue. Residue 73–75 (GAA) participates in substrate binding.

It belongs to the PanD family. As to quaternary structure, heterooctamer of four alpha and four beta subunits. Pyruvate serves as cofactor. Is synthesized initially as an inactive proenzyme, which is activated by self-cleavage at a specific serine bond to produce a beta-subunit with a hydroxyl group at its C-terminus and an alpha-subunit with a pyruvoyl group at its N-terminus.

It is found in the cytoplasm. It carries out the reaction L-aspartate + H(+) = beta-alanine + CO2. It participates in cofactor biosynthesis; (R)-pantothenate biosynthesis; beta-alanine from L-aspartate: step 1/1. Functionally, catalyzes the pyruvoyl-dependent decarboxylation of aspartate to produce beta-alanine. This chain is Aspartate 1-decarboxylase, found in Aliarcobacter butzleri (strain RM4018) (Arcobacter butzleri).